The chain runs to 433 residues: DNA polymerase processivity factor (433 aa).

The segment at 274–433 is disordered; sequence RGDPFDKNYV…VPNTKKQKCG (160 aa). 3 stretches are compositionally biased toward gly residues: residues 289-298, 325-336, and 344-359; these read SRGGGGGGGS, GLGGLGGGGGGG, and GGGGSGTRKMSSGGGG. Residues 360–376 show a composition bias toward basic and acidic residues; it reads GDHDHGLSSKEKYEQHK. A compositionally biased stretch (gly residues) spans 385 to 398; it reads GGSGGGGGGGGGGL. K410 is covalently cross-linked (Glycyl lysine isopeptide (Lys-Gly) (interchain with G-Cter in host SUMO1)). A phosphoserine mark is found at S413, S415, and S418.

It belongs to the herpesviridae polymerase accessory protein family. Forms homodimers. Interacts with host SMARCB1. Interacts with host NCL/nucleolin; this interaction is important for the organization of proteins within viral replication compartments. Interacts with UL112/UL113; this interaction is necessary for efficient viral DNA replication. Interacts with UL84. Interacts with the uracil DNA glycosylase UL114. Interacts with the DNA polymerase catalytic subunit UL54. Interacts with host IRF3. Interacts with host RELA. In terms of processing, phosphorylated by UL97 on serine residues, phosphorylation seems important for UL44 nuclear entry but does not directly affect its role in replication. Sumoylated. Sumoylation on Lys-410 increases viral DNA replication.

The protein localises to the virion. It is found in the host nucleus. Its function is as follows. Accessory subunit of the DNA polymerase that plays an essential role in viral DNA replication and acts by increasing the processivity of polymerization. Forms dimers that binds to double-stranded DNA and UL54 specifically to stimulates long chain DNA synthesis efficiently. Plays an important role in maintaining the structure of viral replication compartments by interacting with host nucleolin/NUC. In addition, suppresses innate immune responses through effects on host IRF3 and NF-kappa-B. Mechanistically, interfere with the binding of IRF3 and the p65 NF-kappa-B subunit to the promoters of antiviral genes, thereby inhibiting the expression of these genes. The protein is DNA polymerase processivity factor (UL44) of Homo sapiens (Human).